A 321-amino-acid chain; its full sequence is Endochitinase 33 (321 aa).

A signal peptide spans 1–19 (MPSLTALASLLALVPSALA). The GH18 domain occupies 27-321 (QNIAVYWGQN…FETQVVNALR (295 aa)). The active-site Proton donor is glutamate 167.

Belongs to the glycosyl hydrolase 18 family. Chitinase class III subfamily. As to quaternary structure, monomer.

It localises to the secreted. It carries out the reaction Random endo-hydrolysis of N-acetyl-beta-D-glucosaminide (1-&gt;4)-beta-linkages in chitin and chitodextrins.. In terms of biological role, secreted chitinase involved in the degradation of chitin, a component of the cell walls of fungi and exoskeletal elements of some animals (including worms and arthropods). Plays a morphogenetic role during apical growth, cell division and differentiation (cell wall morphogenesis). May be involved in the degradation and further assimilation of phytopathogenic fungi, namely mycoparasitism, the major mechanism accounting for the antagonistic activity against phytopathogenic fungi displayed by Trichoderma. This chain is Endochitinase 33 (chit33), found in Trichoderma harzianum (Hypocrea lixii).